Reading from the N-terminus, the 250-residue chain is Indole-3-glycerol phosphate synthase (250 aa).

Belongs to the TrpC family.

The enzyme catalyses 1-(2-carboxyphenylamino)-1-deoxy-D-ribulose 5-phosphate + H(+) = (1S,2R)-1-C-(indol-3-yl)glycerol 3-phosphate + CO2 + H2O. Its pathway is amino-acid biosynthesis; L-tryptophan biosynthesis; L-tryptophan from chorismate: step 4/5. The sequence is that of Indole-3-glycerol phosphate synthase from Bacillus pumilus (strain SAFR-032).